Consider the following 231-residue polypeptide: 7-cyano-7-deazaguanine synthase (231 aa).

Position 11 to 21 (11 to 21 (LSAGLDSTVNA)) interacts with ATP. Cys-197, Cys-205, Cys-208, and Cys-211 together coordinate Zn(2+).

It belongs to the QueC family. It depends on Zn(2+) as a cofactor.

It catalyses the reaction 7-carboxy-7-deazaguanine + NH4(+) + ATP = 7-cyano-7-deazaguanine + ADP + phosphate + H2O + H(+). It participates in purine metabolism; 7-cyano-7-deazaguanine biosynthesis. Catalyzes the ATP-dependent conversion of 7-carboxy-7-deazaguanine (CDG) to 7-cyano-7-deazaguanine (preQ(0)). The polypeptide is 7-cyano-7-deazaguanine synthase (Bdellovibrio bacteriovorus (strain ATCC 15356 / DSM 50701 / NCIMB 9529 / HD100)).